Here is a 61-residue protein sequence, read N- to C-terminus: Large ribosomal subunit protein uL30 (61 aa).

The protein belongs to the universal ribosomal protein uL30 family. Part of the 50S ribosomal subunit.

The protein is Large ribosomal subunit protein uL30 of Saccharophagus degradans (strain 2-40 / ATCC 43961 / DSM 17024).